A 264-amino-acid polypeptide reads, in one-letter code: tRNA (guanine-N(1)-)-methyltransferase (264 aa).

Residues Gly125 and Leu145–Leu150 contribute to the S-adenosyl-L-methionine site.

Belongs to the RNA methyltransferase TrmD family. In terms of assembly, homodimer.

Its subcellular location is the cytoplasm. It catalyses the reaction guanosine(37) in tRNA + S-adenosyl-L-methionine = N(1)-methylguanosine(37) in tRNA + S-adenosyl-L-homocysteine + H(+). Its function is as follows. Specifically methylates guanosine-37 in various tRNAs. The chain is tRNA (guanine-N(1)-)-methyltransferase from Burkholderia ambifaria (strain MC40-6).